The chain runs to 133 residues: Fatty acid-binding protein, heart (133 aa).

An N-acetylalanine modification is found at alanine 2. Threonine 8 is modified (phosphothreonine). Position 20 is a phosphotyrosine; by Tyr-kinases (tyrosine 20). Residue serine 23 is modified to Phosphoserine. Threonine 30 bears the Phosphothreonine mark. Serine 83 carries the phosphoserine modification. 127–129 contacts (9Z)-octadecenoate; that stretch reads RTY. A hexadecanoate-binding site is contributed by 127 to 129; the sequence is RTY. Residue 127–129 coordinates octadecanoate; the sequence is RTY.

Heart, but also skeletal muscle, kidney, brain and mammary gland.

It localises to the cytoplasm. Its function is as follows. FABPs are thought to play a role in the intracellular transport of long-chain fatty acids and their acyl-CoA esters. The sequence is that of Fatty acid-binding protein, heart (Fabp3) from Rattus norvegicus (Rat).